Here is a 156-residue protein sequence, read N- to C-terminus: Ribosomal RNA large subunit methyltransferase H (156 aa).

S-adenosyl-L-methionine-binding positions include leucine 73, glycine 104, and 123–128; that span reads LSALTL.

This sequence belongs to the RNA methyltransferase RlmH family. As to quaternary structure, homodimer.

It localises to the cytoplasm. The catalysed reaction is pseudouridine(1915) in 23S rRNA + S-adenosyl-L-methionine = N(3)-methylpseudouridine(1915) in 23S rRNA + S-adenosyl-L-homocysteine + H(+). Functionally, specifically methylates the pseudouridine at position 1915 (m3Psi1915) in 23S rRNA. The chain is Ribosomal RNA large subunit methyltransferase H from Colwellia psychrerythraea (strain 34H / ATCC BAA-681) (Vibrio psychroerythus).